A 96-amino-acid polypeptide reads, in one-letter code: UPF0213 protein BCE33L0031 (96 aa).

In terms of domain architecture, GIY-YIG spans 4–79 (NKHCFYVVEC…KQLNRKQKEE (76 aa)).

This sequence belongs to the UPF0213 family.

The chain is UPF0213 protein BCE33L0031 from Bacillus cereus (strain ZK / E33L).